We begin with the raw amino-acid sequence, 526 residues long: MDKNIHEQRILILDFGSQYTQLIARRIREIGVYCELWSWDVDEQDIKDFAPNGIILAGGPESVTAEGSPRAPEYVFTAGVPVLGICYGMQTMSEQLGGSVIKGEGEGEFGYAQIEVKGASELFKLIEDAVAQNGNALLDVWMSHGDKVSAIPAGFTTIANTATCQFAAIANEEKRFYGVQFHPEVTHTRQGERMLRHFVMDICGCETLWTSSSIIEDAVARMKAQIGDDEVILGLSGGVDSSVVAMLLQRAIGDKLTCVFVDNGLLRLNEGQQVMDMFGDHFGLKIIHVNAEHRFLEQMAGESDPEAKRKIIGRVFVEIFDEESKKLKNAKWLAQGTIYPDVIESAGSKTGKAQVIKSHHNVGGLPDDMEMGLVEPLRELFKDEVRKIGLELGLPYEMLYRHPFPGPGLGVRVLGEVKKEYCDLLRRADAIFIEELHKADLYHKVSQAFVVFLPVRSVGVMGDCRKYDWVVSLRCVETIDFMTARWSHLPYDLIGHVSNRIINEIDGISRVVYDVSGKPPATIEWE.

The Glutamine amidotransferase type-1 domain maps to 9–208 (RILILDFGSQ…VMDICGCETL (200 aa)). The active-site Nucleophile is the Cys86. Active-site residues include His182 and Glu184. The GMPS ATP-PPase domain maps to 209 to 401 (WTSSSIIEDA…LGLPYEMLYR (193 aa)). 236 to 242 (SGGVDSS) contributes to the ATP binding site.

As to quaternary structure, homodimer.

The enzyme catalyses XMP + L-glutamine + ATP + H2O = GMP + L-glutamate + AMP + diphosphate + 2 H(+). The protein operates within purine metabolism; GMP biosynthesis; GMP from XMP (L-Gln route): step 1/1. Its function is as follows. Catalyzes the synthesis of GMP from XMP. The protein is GMP synthase [glutamine-hydrolyzing] of Psychromonas ingrahamii (strain DSM 17664 / CCUG 51855 / 37).